Consider the following 204-residue polypeptide: MMRTLITIHPLPLLLLLQQLLQPVQFQEVDTDYDLPEDKREEFEEYVEQFFSTGPTRPPTKEKVKRLLLIEPGMPLYHVDYCNSEIMRKNVYYKHRCVAEHYFLLMQYDELQKICYNRFVPCKNGVRKCNRSKGLVEGVYCNLTEAFRIPACKYESFYRKGYVLITCAWQNEMQKLIPHTINDLVEPPEHRSFLSEDGVFVISP.

Residues 1–26 form the signal peptide; sequence MMRTLITIHPLPLLLLLQQLLQPVQF. Intrachain disulfides connect Cys97–Cys152, Cys115–Cys167, and Cys122–Cys129. 2 N-linked (GlcNAc...) asparagine glycosylation sites follow: Asn130 and Asn142.

This sequence belongs to the pancreatic ribonuclease family.

It localises to the secreted. In terms of biological role, does not exhibit any ribonuclease activity. This chain is Inactive ribonuclease-like protein 9 (RNASE9), found in Pongo pygmaeus (Bornean orangutan).